The primary structure comprises 216 residues: Cell division protein SepF (216 aa).

Residues 22-126 (EYVEEPDQAR…PVVDDGGPLA (105 aa)) are disordered. Composition is skewed to basic and acidic residues over residues 28 to 50 (DQARRAPRRSHDGYAERDDREFV), 62 to 80 (SRRDEEDAEFDRYDSRPRV), and 106 to 118 (ARAERPEARRAPV).

Belongs to the SepF family. In terms of assembly, homodimer. Interacts with FtsZ.

The protein localises to the cytoplasm. Cell division protein that is part of the divisome complex and is recruited early to the Z-ring. Probably stimulates Z-ring formation, perhaps through the cross-linking of FtsZ protofilaments. Its function overlaps with FtsA. In Rhodococcus erythropolis (strain PR4 / NBRC 100887), this protein is Cell division protein SepF.